Consider the following 241-residue polypeptide: Venom nerve growth factor 2 (241 aa).

The N-terminal stretch at 1 to 18 (MSMLCYTLITAFLIGIWA) is a signal peptide. Positions 19–125 (APKSEDNVPL…SLNRNIRAKR (107 aa)) are excised as a propeptide. Residues 47 to 67 (GLKTSRNTDQRHPAPQKAEDQ) form a disordered region. 3 disulfides stabilise this stretch: cysteine 139–cysteine 203, cysteine 181–cysteine 231, and cysteine 191–cysteine 233.

Belongs to the NGF-beta family. As to quaternary structure, homodimer; non-covalently linked. Expressed by the venom gland.

Its subcellular location is the secreted. In terms of biological role, nerve growth factor is important for the development and maintenance of the sympathetic and sensory nervous systems. It stimulates division and differentiation of sympathetic and embryonic sensory neurons as well as basal forebrain cholinergic neurons in the brain. Its relevance in the snake venom is not clear. However, it has been shown to inhibit metalloproteinase-dependent proteolysis of platelet glycoprotein Ib alpha, suggesting a metalloproteinase inhibition to prevent metalloprotease autodigestion and/or protection against prey proteases. Binds a lipid between the two protein chains in the homodimer. The lipid-bound form promotes histamine relase from mouse mast cells, contrary to the lipid-free form. In Naja sputatrix (Malayan spitting cobra), this protein is Venom nerve growth factor 2.